Here is a 470-residue protein sequence, read N- to C-terminus: MSTNEGSLWGGRFAGGPSDALAALSKSTHFDWVLAPYDLTASRAHTMVLFRAGLLTEEQRDGLLAGLDSLAQDVADGSFGPLVTDEDVHSALERGLIDRVGPDLGGRLRAGRSRNDQVAALFRMWLRDAVRRVATGVLDVVGALAEQAAAHPSAIMPGKTHLQSAQPILLAHHLLAHAHPLLRDLDRIVDFDKRAAVSPYGSGALAGSSLGLDPDAIAADLGFSAAADNSVDATAARDFAAEAAFVFAMIAVDLSRLAEDIIVWSSTEFGYVTLHDSWSTGSSIMPQKKNPDIAELARGKSGRLIGNLAGLLATLKAQPLAYNRDLQEDKEPVFDSVAQLELLLPAMAGLVASLTFNVQRMAELAPAGYTLATDLAEWLVRQGVPFRSAHEAAGAAVRAAEQRGVGLQELTDDELAAISPELTPQVREVLTIEGSVSARDCRGGTAPGRVAEQLNAIGEAAERLRRQLVR.

Belongs to the lyase 1 family. Argininosuccinate lyase subfamily.

The protein resides in the cytoplasm. It carries out the reaction 2-(N(omega)-L-arginino)succinate = fumarate + L-arginine. It functions in the pathway amino-acid biosynthesis; L-arginine biosynthesis; L-arginine from L-ornithine and carbamoyl phosphate: step 3/3. This is Argininosuccinate lyase from Mycobacterium tuberculosis (strain CDC 1551 / Oshkosh).